The sequence spans 433 residues: Zuotin (433 aa).

A Phosphoserine modification is found at serine 50. The 73-residue stretch at 98-170 folds into the J domain; the sequence is LYAAMGLSKL…RAQYDSCDFV (73 aa). Over residues 292 to 330 the composition is skewed to basic and acidic residues; sequence EEKKEKERRKWEREAGARAEAEAKAKAEAEAKAKAESEA. Residues 292-357 are disordered; the sequence is EEKKEKERRK…KAAKKKNKRA (66 aa).

As to quaternary structure, RAC is a heterodimer of the Hsp70/DnaK-type chaperone SSZ1 and the Hsp40/DnaJ-type chaperone ZUO1. RAC associates with ribosomes via ZUO1.

The protein localises to the cytoplasm. Functionally, component of the ribosome-associated complex (RAC), a heterodimeric chaperone complex involved in regulation of accurate translation termination and in folding or maintaining nascent polypeptides in a folding-competent state. RAC stimulates the ATPase activity of the ribosome-associated pool of Hsp70-type chaperones SSB1/SSB2 that bind to the nascent polypeptide chain. ZUO1 can act as a J-protein for SSB1/SSB2 only when associated with SSZ1. The polypeptide is Zuotin (ZUO1) (Saccharomyces cerevisiae (strain ATCC 204508 / S288c) (Baker's yeast)).